We begin with the raw amino-acid sequence, 274 residues long: Cell division protein FtsQ (274 aa).

Residues 1 to 24 form a disordered region; that stretch reads MRDLHAKKQRVPHNRVKKPPKERK. The Cytoplasmic segment spans residues 1–33; that stretch reads MRDLHAKKQRVPHNRVKKPPKERKPINWGPILK. Residues 7–21 are compositionally biased toward basic residues; sequence KKQRVPHNRVKKPPK. Residues 34–56 traverse the membrane as a helical segment; the sequence is FASRGFGGAALCAGLGFGGWQLY. At 57-274 the chain is on the periplasmic side; the sequence is NLVSRTTLLR…YADKIIVKKV (218 aa). Positions 65-133 constitute a POTRA domain; sequence LRLEAIEVSP…HTLSITVSER (69 aa).

The protein belongs to the FtsQ/DivIB family. FtsQ subfamily.

It localises to the cell inner membrane. In terms of biological role, essential cell division protein. The protein is Cell division protein FtsQ of Geobacter sp. (strain M21).